Reading from the N-terminus, the 24-residue chain is Calcium-binding shell glycoprotein P50 (24 aa).

Residues 1–24 (KDALEHTGFAPKKDGEEHVEWNYN) are disordered.

Post-translationally, glycosylated. Nacreous and prismatic layers of the shell.

Functionally, calcium-binding. The polypeptide is Calcium-binding shell glycoprotein P50 (Unio pictorum (Painter's mussel)).